A 545-amino-acid chain; its full sequence is Mitogen-activated protein kinase kinase kinase mom-4 (545 aa).

Residues 1 to 21 are compositionally biased toward low complexity; that stretch reads MDTSPHSKPSSSSASQSSHSP. The segment at 1 to 35 is disordered; it reads MDTSPHSKPSSSSASQSSHSPSPAPVTAPRKTRDS. A Protein kinase domain is found at 53 to 308; the sequence is NLNSHQLGRG…AECLQYFTAL (256 aa). Residues 59–67 and K86 contribute to the ATP site; that span reads LGRGTYGIV. Residue D178 is the Proton acceptor of the active site. Residues 316–444 form a disordered region; it reads NVPLADANTN…PIDDRRDSNE (129 aa). 2 stretches are compositionally biased toward polar residues: residues 352 to 369 and 396 to 411; these read NGRT…QAVN and ASSS…QSEA.

The protein belongs to the protein kinase superfamily. STE Ser/Thr protein kinase family. MAP kinase kinase kinase subfamily. As to quaternary structure, interacts with, and is activated by, tap-1. Requires Mg(2+) as cofactor.

The enzyme catalyses L-seryl-[protein] + ATP = O-phospho-L-seryl-[protein] + ADP + H(+). It carries out the reaction L-threonyl-[protein] + ATP = O-phospho-L-threonyl-[protein] + ADP + H(+). Part of the Wnt signaling pathway essential for the specification of the mesodermal cell fate in early embryos. Stimulates the wrm-1/lit-1-dependent phosphorylation of pop-1 and plays a role in the initial nuclear accumulation of wrm-1. This Caenorhabditis briggsae protein is Mitogen-activated protein kinase kinase kinase mom-4.